Consider the following 80-residue polypeptide: Serine palmitoyltransferase small subunit B (80 aa).

Over 1–11 the chain is Cytoplasmic; that stretch reads MDMKNMREYMS. The helical transmembrane segment at 12–29 threads the bilayer; the sequence is WLYYQYLLITGIYVLEPW. Over 30–36 the chain is Lumenal; that stretch reads EQSIFNT. A helical membrane pass occupies residues 37-57; it reads VLFTMVAMVIYTSYVFVPIHV. Over 58–80 the chain is Cytoplasmic; that stretch reads RLALEFFCELVGGQPESTVALMT.

It belongs to the SPTSS family. SPTSSB subfamily. Component of the serine palmitoyltransferase (SPT) complex, which is composed of SPTLC1, SPTLC2 or SPTLC3 and SPTSSA or SPTSSB. The heterodimer consisting of SPTLC1 and SPTLC2/SPTLC3 forms the catalytic core of the enzyme, while SPTSSA or SPTSSB subunits determine substrate specificity. SPT also interacts with ORMDL proteins, especially ORMDL3, which negatively regulate SPT activity in the presence of ceramides.

Its subcellular location is the endoplasmic reticulum membrane. It functions in the pathway lipid metabolism; sphingolipid metabolism. In terms of biological role, component of the serine palmitoyltransferase multisubunit enzyme (SPT) that catalyzes the initial and rate-limiting step in sphingolipid biosynthesis by condensing L-serine and activated acyl-CoA (most commonly palmitoyl-CoA) to form long-chain bases. The SPT complex is composed of SPTLC1, SPTLC2 or SPTLC3 and SPTSSA or SPTSSB. Within this complex, the heterodimer consisting of SPTLC1 and SPTLC2/SPTLC3 forms the catalytic core. Within the SPT complex, SPTSSB stimulates the catalytic activity and plays a role in substrate specificity. SPT complexes with this subunit showing a preference for longer acyl-CoAs. The SPTLC1-SPTLC2-SPTSSB complex shows a strong preference for C18-CoA substrate, while the SPTLC1-SPTLC3-SPTSSB isozyme displays an ability to use a broader range of acyl-CoAs, without apparent preference. This Danio rerio (Zebrafish) protein is Serine palmitoyltransferase small subunit B (sptssb).